The chain runs to 1080 residues: Ubiquitin-activating enzyme E1 1 (1080 aa).

Residues 1–14 (MLHKRASEANDKND) are compositionally biased toward basic and acidic residues. Disordered regions lie at residues 1 to 20 (MLHKRASEANDKNDNTIIGS) and 29 to 50 (RIDFTESSSDKSSSILASGSSR). Residues 38–49 (DKSSSILASGSS) are compositionally biased toward low complexity. Residues Ala-502, Asp-528, Arg-539, Lys-552, and 600 to 601 (DN) each bind ATP. Catalysis depends on Cys-656, which acts as the Glycyl thioester intermediate.

This sequence belongs to the ubiquitin-activating E1 family. Monomer. In terms of tissue distribution, expressed in leaves, flowers, roots and stems. Detected in germinating seeds, cotyledons, hypocotyls, vascular tissues, anthers, filaments, pollen, style, stigma, sepals, petals, ovary, developing ovules, funiculi and silique walls.

It catalyses the reaction ATP + ubiquitin + [E1 ubiquitin-activating enzyme]-L-cysteine = AMP + diphosphate + S-ubiquitinyl-[E1 ubiquitin-activating enzyme]-L-cysteine.. Its pathway is protein modification; protein ubiquitination. Activates ubiquitin by first adenylating its C-terminal glycine residue with ATP, and thereafter linking this residue to the side chain of a cysteine residue in E1, yielding a ubiquitin-E1 thioester and free AMP. In Arabidopsis thaliana (Mouse-ear cress), this protein is Ubiquitin-activating enzyme E1 1 (UBA1).